We begin with the raw amino-acid sequence, 940 residues long: Serine/threonine-protein kinase PLK4 (940 aa).

The Protein kinase domain occupies 12–265; sequence FKVLTLLGKG…LSAVLDHPFM (254 aa). ATP-binding positions include 18 to 26 and Lys-41; that span reads LGKGSFACV. Asp-136 serves as the catalytic Proton acceptor. 2 disordered regions span residues 262–353 and 409–529; these read HPFM…DLSR and RLFP…DAFV. Positions 273-305 are enriched in low complexity; sequence SKDSGSSNGGSIDSGIATISTASNATNNSSSSR. Composition is skewed to polar residues over residues 337–349, 440–465, and 494–519; these read FKSG…NSQD, NPAS…QPWF, and GTQT…QHNN. The 114-residue stretch at 563–676 folds into the Cryptic POLO box 1 (CPB1) domain; the sequence is CLKKSFPPLC…TKFVQLVKSK (114 aa). Residues 677–791 enclose the Cryptic POLO box 2 (CPB2) domain; the sequence is TPKVTLYTKF…GRRPVNPVPP (115 aa). A POLO box domain is found at 857 to 935; the sequence is KVLKSIFVPN…LSSILGLLAN (79 aa).

It belongs to the protein kinase superfamily. Ser/Thr protein kinase family. CDC5/Polo subfamily. Homodimer. Ubiquitinated; leading to its degradation by the proteasome.

It is found in the cytoplasm. The protein resides in the cytoskeleton. It localises to the microtubule organizing center. Its subcellular location is the centrosome. The protein localises to the centriole. The enzyme catalyses L-seryl-[protein] + ATP = O-phospho-L-seryl-[protein] + ADP + H(+). The catalysed reaction is L-threonyl-[protein] + ATP = O-phospho-L-threonyl-[protein] + ADP + H(+). Functionally, serine/threonine-protein kinase that plays a central role in centriole duplication. Able to trigger procentriole formation on the surface of the parental centriole cylinder, leading to the recruitment of centriole biogenesis proteins such as sass6, cpap, ccp110, cep135 and gamma-tubulin. When overexpressed, it is able to induce centrosome amplification through the simultaneous generation of multiple procentrioles adjoining each parental centriole during S phase. Its central role in centriole replication suggests a possible role in tumorigenesis, centrosome aberrations being frequently observed in tumors. Also involved in deuterosome-mediated centriole amplification in multiciliated that can generate more than 100 centrioles. The polypeptide is Serine/threonine-protein kinase PLK4 (Danio rerio (Zebrafish)).